The chain runs to 252 residues: Glycerol-3-phosphate acyltransferase (252 aa).

6 helical membrane-spanning segments follow: residues 6–26 (SVAM…YLIG), 66–86 (ILTL…TYII), 104–124 (AILV…PIFF), 140–160 (ITID…ILLI), 164–184 (MSLS…IPGI), and 204–224 (VIKG…ILIY).

The protein belongs to the PlsY family. As to quaternary structure, probably interacts with PlsX.

The protein localises to the cell membrane. The enzyme catalyses an acyl phosphate + sn-glycerol 3-phosphate = a 1-acyl-sn-glycero-3-phosphate + phosphate. It functions in the pathway lipid metabolism; phospholipid metabolism. Functionally, catalyzes the transfer of an acyl group from acyl-phosphate (acyl-PO(4)) to glycerol-3-phosphate (G3P) to form lysophosphatidic acid (LPA). This enzyme utilizes acyl-phosphate as fatty acyl donor, but not acyl-CoA or acyl-ACP. The polypeptide is Glycerol-3-phosphate acyltransferase (Ureaplasma urealyticum serovar 10 (strain ATCC 33699 / Western)).